Reading from the N-terminus, the 89-residue chain is Small ribosomal subunit protein uS14 (89 aa).

The protein belongs to the universal ribosomal protein uS14 family. Part of the 30S ribosomal subunit. Contacts proteins S3 and S10.

Functionally, binds 16S rRNA, required for the assembly of 30S particles and may also be responsible for determining the conformation of the 16S rRNA at the A site. The chain is Small ribosomal subunit protein uS14 from Leuconostoc citreum (strain KM20).